The following is a 495-amino-acid chain: Phytochrome A type 5 (495 aa).

Positions 1–21 are enriched in low complexity; sequence MSSSRPASSSSSRNRQSSQAR. A disordered region spans residues 1 to 24; that stretch reads MSSSRPASSSSSRNRQSSQARVLA. Residues 217–402 form the GAF domain; it reads SMEMLCNTVV…VFAVHVNREF (186 aa). Residue C322 participates in phytochromobilin binding.

This sequence belongs to the phytochrome family. As to quaternary structure, homodimer. In terms of processing, contains one covalently linked phytochromobilin chromophore.

Regulatory photoreceptor which exists in two forms that are reversibly interconvertible by light: the Pr form that absorbs maximally in the red region of the spectrum and the Pfr form that absorbs maximally in the far-red region. Photoconversion of Pr to Pfr induces an array of morphogenic responses, whereas reconversion of Pfr to Pr cancels the induction of those responses. Pfr controls the expression of a number of nuclear genes including those encoding the small subunit of ribulose-bisphosphate carboxylase, chlorophyll A/B binding protein, protochlorophyllide reductase, rRNA, etc. It also controls the expression of its own gene(s) in a negative feedback fashion. This Avena sativa (Oat) protein is Phytochrome A type 5 (PHYA5).